Here is a 617-residue protein sequence, read N- to C-terminus: ATP-dependent RNA helicase DBP1 (617 aa).

The interval 1-90 is disordered; the sequence is MADLPQKVSN…TSANYNRGGS (90 aa). The span at 7–17 shows a compositional bias: polar residues; it reads KVSNLSINNKE. The span at 38–58 shows a compositional bias: basic and acidic residues; it reads PSFERSTPKQEDKVTGGDFFR. The segment covering 79–90 has biased composition (polar residues); that stretch reads GGTSANYNRGGS. The short motif at 154 to 182 is the Q motif element; that stretch reads LDFSSPPLDELLMENIKLASFTKPTPVQK. Residues 185–374 enclose the Helicase ATP-binding domain; the sequence is IPIVTKGRDL…RDFLDNYIFL (190 aa). 198-205 contributes to the ATP binding site; the sequence is AQTGSGKT. Positions 318-321 match the DEAD box motif; that stretch reads DEAD. Positions 385 to 545 constitute a Helicase C-terminal domain; sequence NITQRILYVD…EVPTFLSDLS (161 aa). Positions 542–617 are disordered; sequence SDLSRQNSRG…GYGNSNASWW (76 aa). Positions 580–594 are enriched in polar residues; sequence FGSTRPRNTGTSNWG.

Belongs to the DEAD box helicase family. DDX3/DED1 subfamily.

Its subcellular location is the cytoplasm. It carries out the reaction ATP + H2O = ADP + phosphate + H(+). In terms of biological role, ATP-binding RNA helicase involved in translation initiation. Remodels RNA in response to ADP and ATP concentrations by facilitating disruption, but also formation of RNA duplexes. Redundant to DED1, may be required in conditions in which DED1 expression is decreased. In Saccharomyces cerevisiae (strain YJM789) (Baker's yeast), this protein is ATP-dependent RNA helicase DBP1 (DBP1).